Consider the following 66-residue polypeptide: UPF0370 protein YpfN (66 aa).

A helical transmembrane segment spans residues 4 to 24 (LAKYWWILVLVFLVGVLLNVI). The segment at 39 to 66 (KPELPPHRDFNDKWDDEDDWPKKDQPKK) is disordered. The segment covering 42–51 (LPPHRDFNDK) has biased composition (basic and acidic residues).

It belongs to the UPF0370 family.

It localises to the cell membrane. The sequence is that of UPF0370 protein YpfN from Salmonella paratyphi C (strain RKS4594).